The following is a 128-amino-acid chain: Photosystem II reaction center Psb28 protein (128 aa).

Residues 109 to 128 (SGLGYSQDSGEAPASDSSNG) are disordered. Over residues 111 to 128 (LGYSQDSGEAPASDSSNG) the composition is skewed to polar residues.

It belongs to the Psb28 family. Part of the photosystem II complex.

The protein localises to the cellular thylakoid membrane. The polypeptide is Photosystem II reaction center Psb28 protein (Synechococcus sp. (strain CC9311)).